A 376-amino-acid polypeptide reads, in one-letter code: E3 ubiquitin-protein ligase RNF133 (376 aa).

The region spanning 65 to 167 (SSTLKRVAGV…LKGTEIFHLI (103 aa)) is the PA domain. A helical membrane pass occupies residues 190–210 (YLVSFVIVTTATLAYFIFYHI). The segment at 256–297 (CVICFEHYKPNDIVRILTCKHFFHKNCIDPWILSHGTCPICK) adopts an RING-type; atypical zinc-finger fold. The tract at residues 328 to 376 (TLSPSEEETNNEVSPAGTSDKVIHVEENPTSQNNDSQPHSVVEDVHPSP) is disordered. Polar residues predominate over residues 355–366 (NPTSQNNDSQPH).

Interacts with E3 ligase UBE2J1. In terms of processing, auto-ubiquitinated.

It is found in the endoplasmic reticulum membrane. It catalyses the reaction S-ubiquitinyl-[E2 ubiquitin-conjugating enzyme]-L-cysteine + [acceptor protein]-L-lysine = [E2 ubiquitin-conjugating enzyme]-L-cysteine + N(6)-ubiquitinyl-[acceptor protein]-L-lysine.. Its pathway is protein modification; protein ubiquitination. Functionally, has E3 ubiquitin-protein ligase activity. Plays a role in male fecundity through the interaction with the E2 ubituitin-protein ligase UBE2J1. This is E3 ubiquitin-protein ligase RNF133 (RNF133) from Macaca fascicularis (Crab-eating macaque).